Consider the following 101-residue polypeptide: Small ribosomal subunit protein uS14 (101 aa).

The protein belongs to the universal ribosomal protein uS14 family. Part of the 30S ribosomal subunit. Contacts proteins S3 and S10.

Its function is as follows. Binds 16S rRNA, required for the assembly of 30S particles and may also be responsible for determining the conformation of the 16S rRNA at the A site. The sequence is that of Small ribosomal subunit protein uS14 from Shewanella sp. (strain ANA-3).